The chain runs to 152 residues: Ribosomal RNA large subunit methyltransferase H (152 aa).

Residues Leu69, Gly96, and 118–123 (FGKLTF) each bind S-adenosyl-L-methionine.

Belongs to the RNA methyltransferase RlmH family. As to quaternary structure, homodimer.

The protein resides in the cytoplasm. The catalysed reaction is pseudouridine(1915) in 23S rRNA + S-adenosyl-L-methionine = N(3)-methylpseudouridine(1915) in 23S rRNA + S-adenosyl-L-homocysteine + H(+). In terms of biological role, specifically methylates the pseudouridine at position 1915 (m3Psi1915) in 23S rRNA. This Mesomycoplasma hyopneumoniae (strain 7448) (Mycoplasma hyopneumoniae) protein is Ribosomal RNA large subunit methyltransferase H.